A 285-amino-acid chain; its full sequence is Secreted alkaline triacylglycerol lipase (285 aa).

Positions 1-20 (MLFNYQSLLVGVSLISQALS) are cleaved as a signal peptide. The active-site Nucleophile is the serine 159. Catalysis depends on charge relay system residues aspartate 215 and histidine 268.

Belongs to the AB hydrolase superfamily. FaeA family.

It localises to the secreted. The enzyme catalyses a triacylglycerol + H2O = a diacylglycerol + a fatty acid + H(+). Functionally, secreted alkaline lipase that hydrolyzes acylglycerol lipids such as triacylglycerols and consequently releases free fatty acid. Is able to hydrolyze tributyrin (1,2,3-tributyryl-glycerin). The chain is Secreted alkaline triacylglycerol lipase from Penicillium cyclopium.